The chain runs to 466 residues: Putative transcription factor bHLH041 (466 aa).

3 disordered regions span residues proline 108 to proline 129, leucine 194 to alanine 213, and arginine 260 to glutamine 289. Residues proline 120–proline 129 show a composition bias toward low complexity. Gly residues predominate over residues glutamate 268–tyrosine 279. The region spanning alanine 285–leucine 334 is the bHLH domain.

Homodimer.

The protein resides in the nucleus. The polypeptide is Putative transcription factor bHLH041 (BHLH41) (Arabidopsis thaliana (Mouse-ear cress)).